Here is a 184-residue protein sequence, read N- to C-terminus: Photosystem I assembly protein Ycf4 (184 aa).

A run of 2 helical transmembrane segments spans residues 22-42 (FCWAFILFLGSLGFLLVGTSS) and 57-77 (IIFFPQGIVMSFYGIAGLFIS).

It belongs to the Ycf4 family.

Its subcellular location is the plastid. It is found in the chloroplast thylakoid membrane. Functionally, seems to be required for the assembly of the photosystem I complex. The sequence is that of Photosystem I assembly protein Ycf4 from Lepidium virginicum (Virginia pepperweed).